The following is a 143-amino-acid chain: Hexaprenyl-diphosphate synthase small subunit ((2E,6E)-farnesyl-diphosphate specific) (143 aa).

In terms of assembly, dimer of heterodimer or heterotetramer composed of a small (Hexs-a) and large (Hexs-B) subunit.

It catalyses the reaction 3 isopentenyl diphosphate + (2E,6E)-farnesyl diphosphate = all-trans-hexaprenyl diphosphate + 3 diphosphate. Functionally, catalyzes the condensation of three molecules of isopentenyl diphosphate with farnesyl diphosphate (FPP) to yield (all-E)-hexaprenyl diphosphate (HexPP; C30), the precursor of the prenyl side chain of menaquinone-6. Large subunit Hexs-B catalyzes the condensation reaction and the final product chain length is cooperatively regulated by both the Hexs-A and Hexs-B subunits using the whole size of the hydrophobic cleft as a ruler. This Micrococcus luteus (Micrococcus lysodeikticus) protein is Hexaprenyl-diphosphate synthase small subunit ((2E,6E)-farnesyl-diphosphate specific) (hexs-a).